A 456-amino-acid chain; its full sequence is Probable serine/threonine-protein kinase DDB_G0277449 (456 aa).

Residues 50 to 83 show a composition bias toward low complexity; that stretch reads STSPTECEESSSSTITTPSEESLSSGEESSSISD. Positions 50–84 are disordered; it reads STSPTECEESSSSTITTPSEESLSSGEESSSISDS. The region spanning 128–383 is the Protein kinase domain; sequence FIIKHLVGKG…AIEIKRHPFF (256 aa). Residues 134–142 and lysine 157 contribute to the ATP site; that span reads VGKGGFGKV. Aspartate 251 (proton acceptor) is an active-site residue. An AGC-kinase C-terminal domain is found at 384–455; it reads KSIQWRKIEN…VRTPVLLESQ (72 aa).

Belongs to the protein kinase superfamily. AGC Ser/Thr protein kinase family.

The enzyme catalyses L-seryl-[protein] + ATP = O-phospho-L-seryl-[protein] + ADP + H(+). The catalysed reaction is L-threonyl-[protein] + ATP = O-phospho-L-threonyl-[protein] + ADP + H(+). The chain is Probable serine/threonine-protein kinase DDB_G0277449 from Dictyostelium discoideum (Social amoeba).